A 261-amino-acid chain; its full sequence is Carnitinyl-CoA dehydratase (261 aa).

The active-site Nucleophile is the Glu-111. The active-site Proton acceptor is the Glu-131.

The protein belongs to the enoyl-CoA hydratase/isomerase family.

It catalyses the reaction (R)-carnitinyl-CoA = crotonobetainyl-CoA + H2O. It functions in the pathway amine and polyamine metabolism; carnitine metabolism. In terms of biological role, catalyzes the reversible dehydration of L-carnitinyl-CoA to crotonobetainyl-CoA. This Salmonella paratyphi C (strain RKS4594) protein is Carnitinyl-CoA dehydratase.